The primary structure comprises 422 residues: Serpin A11 (422 aa).

Residues 1–24 (MGPVWLWLLIAELLLPVHYQPSSA) form the signal peptide. Residues 25–45 (HGDKSLGAPQPASHQSLEPAP) are disordered. 4 N-linked (GlcNAc...) asparagine glycosylation sites follow: N106, N169, N350, and N385.

Belongs to the serpin family.

It is found in the secreted. This chain is Serpin A11 (Serpina11), found in Rattus norvegicus (Rat).